Here is a 260-residue protein sequence, read N- to C-terminus: Ribonuclease HII (260 aa).

In terms of domain architecture, RNase H type-2 spans 70–260; that stretch reads QAIAGIDEVG…PIKSMLKEKN (191 aa). Asp76, Glu77, and Asp171 together coordinate a divalent metal cation.

Belongs to the RNase HII family. Mn(2+) is required as a cofactor. Requires Mg(2+) as cofactor.

The protein localises to the cytoplasm. It catalyses the reaction Endonucleolytic cleavage to 5'-phosphomonoester.. Endonuclease that specifically degrades the RNA of RNA-DNA hybrids. In Streptococcus mutans serotype c (strain ATCC 700610 / UA159), this protein is Ribonuclease HII.